A 360-amino-acid chain; its full sequence is UDP-N-acetylglucosamine--N-acetylmuramyl-(pentapeptide) pyrophosphoryl-undecaprenol N-acetylglucosamine transferase (360 aa).

Residues 11 to 13, Asn120, Arg161, Ser188, and Gln282 contribute to the UDP-N-acetyl-alpha-D-glucosamine site; that span reads TGG.

It belongs to the glycosyltransferase 28 family. MurG subfamily.

It localises to the cell inner membrane. The catalysed reaction is di-trans,octa-cis-undecaprenyl diphospho-N-acetyl-alpha-D-muramoyl-L-alanyl-D-glutamyl-meso-2,6-diaminopimeloyl-D-alanyl-D-alanine + UDP-N-acetyl-alpha-D-glucosamine = di-trans,octa-cis-undecaprenyl diphospho-[N-acetyl-alpha-D-glucosaminyl-(1-&gt;4)]-N-acetyl-alpha-D-muramoyl-L-alanyl-D-glutamyl-meso-2,6-diaminopimeloyl-D-alanyl-D-alanine + UDP + H(+). It functions in the pathway cell wall biogenesis; peptidoglycan biosynthesis. Its function is as follows. Cell wall formation. Catalyzes the transfer of a GlcNAc subunit on undecaprenyl-pyrophosphoryl-MurNAc-pentapeptide (lipid intermediate I) to form undecaprenyl-pyrophosphoryl-MurNAc-(pentapeptide)GlcNAc (lipid intermediate II). This is UDP-N-acetylglucosamine--N-acetylmuramyl-(pentapeptide) pyrophosphoryl-undecaprenol N-acetylglucosamine transferase from Synechococcus sp. (strain RCC307).